A 460-amino-acid chain; its full sequence is MALPLRTARHASRLAQTIGRRGYATAEPDLKSALKAVIPAKRELLAEVKKQGDEVIGEVKVSNVIGGMRGLKSMLWEGSVLDADEGIRFHGKTIKDCQKELPKGPTGTEMLPEAMFWLLLTGEVPSTSQVRAFSKQLAEESHLPDHILDLAKSFPKHMHPMTQISIITAALNTESKFAKLYEKGINKADYWEPTFDDAISLLAKIPRVAALVFRPNEIDVVGRQKLDPAQDWSYNFAELLGKGGANNADFHDLLRLYLALHGDHEGGNVSAHATHLVGSALSDPFLSYSAGLLGLAGPLHGLAAQEVLRWILAMQEKIGTKFTDEDVRAYLWDTLKSGRVVPGYGHGVLRKPDPRFQALMDFAATRKDVLANPVFQLVKKNSEIAPGVLTEHGKTKNPHPNVDAASGVLFYHYGFQQPLYYTVTFGVSRALGPLVQLIWDRALGLPIERPKSINLLGLKK.

A mitochondrion-targeting transit peptide spans 1 to 24 (MALPLRTARHASRLAQTIGRRGYA). Residues R69 and K187 each coordinate CoA. H264 is a binding site for oxaloacetate. L299 lines the CoA pocket. H300 is a catalytic residue. 3 residues coordinate CoA: V341, G343, and Y344. Residues H346 and R355 each coordinate oxaloacetate. H346 is an active-site residue. T395, K396, and N401 together coordinate CoA. Residue D403 is part of the active site. Oxaloacetate-binding residues include R429 and R449.

It belongs to the citrate synthase family. Homodimer.

The protein localises to the mitochondrion matrix. It carries out the reaction propanoyl-CoA + oxaloacetate + H2O = (2S,3S)-2-methylcitrate + CoA + H(+). It catalyses the reaction oxaloacetate + acetyl-CoA + H2O = citrate + CoA + H(+). It participates in organic acid metabolism; propanoate degradation. With respect to regulation, partially inhibited by ATP. Functionally, catalyzes the synthesis of (2S,3S)-2-methylcitrate from propionyl-CoA and oxaloacetate and also from acetyl-CoA and oxaloacetate with a greater efficiency. Also has citrate synthase activity and can substitute for the loss of citA activity. This is 2-methylcitrate synthase, mitochondrial from Emericella nidulans (strain FGSC A4 / ATCC 38163 / CBS 112.46 / NRRL 194 / M139) (Aspergillus nidulans).